Reading from the N-terminus, the 228-residue chain is Histidine/lysine/arginine/ornithine transport system permease protein HisQ (228 aa).

Residues 1-12 lie on the Periplasmic side of the membrane; the sequence is MLYGFSGVILQG. Residues 13 to 33 traverse the membrane as a helical segment; that stretch reads AIVTLELALSSVVLAVLIGLV. The region spanning 13–212 is the ABC transmembrane type-1 domain; sequence AIVTLELALS…VFTTVSNGVL (200 aa). Over 34-58 the chain is Cytoplasmic; the sequence is GAGAKLSQNRVTGLIFEGYTTLIRG. Residues 59 to 79 form a helical membrane-spanning segment; sequence VPDLVLMLLIFYGLQIALNVV. The Periplasmic segment spans residues 80–87; sequence TDSLGIDQ. The chain crosses the membrane as a helical span at residues 88–108; it reads IDIDPMVAGIITLGFIYGAYF. The Cytoplasmic segment spans residues 109–152; that stretch reads TETFRGAFMAVPKGHIEAATAFGFTHGQTFRRIMFPAMMRYALP. A helical transmembrane segment spans residues 153–173; that stretch reads GIGNNWQVILKATALVSLLGL. Residues 174-194 are Periplasmic-facing; that stretch reads EDVVKATQLAGKSTWEPFYFA. A helical membrane pass occupies residues 195-215; sequence VVCGLIYLVFTTVSNGVLLLL. Residues 216–228 are Cytoplasmic-facing; that stretch reads ERRYSVGVKRADL.

It belongs to the binding-protein-dependent transport system permease family. HisMQ subfamily. The HisPMQJ complex is composed of two ATP-binding proteins (HisP), two transmembrane proteins (HisM and HisQ) and a solute-binding protein (HisJ). The HisPMQ-ArgT complex is composed of two ATP-binding proteins (HisP), two transmembrane proteins (HisM and HisQ) and a solute-binding protein (ArgT).

Its subcellular location is the cell inner membrane. Part of the ABC transporter complex HisPMQJ involved in histidine transport. Is also part of the ABC transporter complex HisPMQ-ArgT involved in lysine/arginine/ornithine transport. Probably responsible for the translocation of the substrate across the membrane. The protein is Histidine/lysine/arginine/ornithine transport system permease protein HisQ (hisQ) of Salmonella typhi.